We begin with the raw amino-acid sequence, 247 residues long: Neurotrophic factor BDNF precursor form (247 aa).

An N-terminal signal peptide occupies residues 1 to 18; that stretch reads MTILFLTMVISYFGCMKA. A propeptide spanning residues 19 to 128 is cleaved from the precursor; sequence APMKEANIRG…AANMSMRVRR (110 aa). Residue Asn121 is glycosylated (N-linked (GlcNAc...) asparagine). Intrachain disulfides connect Cys141-Cys208, Cys186-Cys237, and Cys196-Cys239.

The protein belongs to the NGF-beta family. Monomers and homodimers. Binds to NTRK2/TRKB. Can form heterodimers with other neurotrophin family members, such as NTF3 and NTF4 (in vitro), but the physiological relevance of this is not clear. BDNF precursor form: interacts with the heterodimer formed by NGFR and SORCS2. N-glycosylated and glycosulfated, contrary to mature BDNF. In terms of processing, mature BDNF is produced by proteolytic removal of the propeptide, catalyzed by a FURIN family member. In addition, the precursor form is proteolytically cleaved within the propeptide, but this is not an obligatory intermediate for the production of mature BDNF. Can be converted into mature BDNF by plasmin (PLG). As to expression, detected in blood plasma and in saliva (at protein level). Brain. Highly expressed in hippocampus, amygdala, cerebral cortex and cerebellum. Also expressed in heart, lung, skeletal muscle, testis, prostate and placenta.

Its subcellular location is the secreted. Its function is as follows. Important signaling molecule that activates signaling cascades downstream of NTRK2. During development, promotes the survival and differentiation of selected neuronal populations of the peripheral and central nervous systems. Participates in axonal growth, pathfinding and in the modulation of dendritic growth and morphology. Major regulator of synaptic transmission and plasticity at adult synapses in many regions of the CNS. The versatility of BDNF is emphasized by its contribution to a range of adaptive neuronal responses including long-term potentiation (LTP), long-term depression (LTD), certain forms of short-term synaptic plasticity, as well as homeostatic regulation of intrinsic neuronal excitability. Important signaling molecule that activates signaling cascades downstream of NTRK2. Activates signaling cascades via the heterodimeric receptor formed by NGFR and SORCS2. Signaling via NGFR and SORCS2 plays a role in synaptic plasticity and long-term depression (LTD). Binding to NGFR and SORCS2 promotes neuronal apoptosis. Promotes neuronal growth cone collapse. The protein is Neurotrophic factor BDNF precursor form of Homo sapiens (Human).